A 182-amino-acid chain; its full sequence is 5-formyltetrahydrofolate cyclo-ligase (182 aa).

Residues 1-21 (MIRQRRRALTPEQQQEMGQQA) are disordered. Residues 11–21 (PEQQQEMGQQA) are compositionally biased toward polar residues. Residues 128 to 135 (GMGGGFYD) and Asp167 each bind ATP.

This sequence belongs to the 5-formyltetrahydrofolate cyclo-ligase family.

The catalysed reaction is (6S)-5-formyl-5,6,7,8-tetrahydrofolate + ATP = (6R)-5,10-methenyltetrahydrofolate + ADP + phosphate. It functions in the pathway one-carbon metabolism; tetrahydrofolate interconversion. Involved in the removal of 5-formyltetrahydrofolate. In vitro, it is a potent inhibitor of various folate-dependent enzymes in the C1 metabolism network and in vivo it might function as a folate storage. 5-formyltetrahydrofolate is also used as an antifolate rescue agent in cancer chemotherapy. Catalyzes the irreversible ATP-dependent transformation of 5-formyltetrahydrofolate (5-CHO-THF) to form 5,10-methenyltetrahydrofolate (5,10-CH=THF). The reverse reaction is catalyzed by the serine hydroxymethyltransferase GlyA (SHMT). The polypeptide is 5-formyltetrahydrofolate cyclo-ligase (ygfA) (Escherichia coli O157:H7).